Consider the following 278-residue polypeptide: Protein saf1 (278 aa).

Disordered regions lie at residues 1-43 (MLSK…RNMS), 81-210 (KKNI…DIEE), and 240-264 (QKLA…EDKD). 2 stretches are compositionally biased toward basic and acidic residues: residues 22–38 (QIKV…ERLS) and 90–103 (GRVE…AERQ). 2 stretches are compositionally biased toward basic residues: residues 104 to 116 (HKPR…KNPK) and 169 to 183 (REKK…HHKK). A compositionally biased stretch (polar residues) spans 186 to 202 (INASSAQPKSTTTTEAA).

It localises to the nucleus. It is found in the nucleolus. This chain is Protein saf1 (saf1), found in Schizosaccharomyces pombe (strain 972 / ATCC 24843) (Fission yeast).